The following is a 495-amino-acid chain: 4-aminobutyrate aminotransferase (495 aa).

160–161 provides a ligand contact to pyridoxal 5'-phosphate; sequence GS. R216 serves as a coordination point for substrate. K350 is subject to N6-(pyridoxal phosphate)lysine. T374 contributes to the pyridoxal 5'-phosphate binding site.

Belongs to the class-III pyridoxal-phosphate-dependent aminotransferase family. Homodimer. The cofactor is pyridoxal 5'-phosphate.

The enzyme catalyses 4-aminobutanoate + 2-oxoglutarate = succinate semialdehyde + L-glutamate. The protein is 4-aminobutyrate aminotransferase (gabT) of Dictyostelium discoideum (Social amoeba).